Reading from the N-terminus, the 304-residue chain is N-acetyl-D-glucosamine kinase (304 aa).

Residues Gly-4–Lys-11 and Gly-133–Leu-140 each bind ATP. Residues His-157, Cys-178, Cys-180, and Cys-185 each contribute to the Zn(2+) site.

It belongs to the ROK (NagC/XylR) family. NagK subfamily.

The enzyme catalyses N-acetyl-D-glucosamine + ATP = N-acetyl-D-glucosamine 6-phosphate + ADP + H(+). Its pathway is cell wall biogenesis; peptidoglycan recycling. Functionally, catalyzes the phosphorylation of N-acetyl-D-glucosamine (GlcNAc) derived from cell-wall degradation, yielding GlcNAc-6-P. The polypeptide is N-acetyl-D-glucosamine kinase (Haemophilus influenzae (strain 86-028NP)).